The chain runs to 115 residues: ComG operon protein 5 (115 aa).

A propeptide spans 1 to 7 (leader sequence); sequence MWRENKG. Phe8 carries the N-methylphenylalanine modification. Residues 13-31 traverse the membrane as a helical segment; that stretch reads TMSALSLWLFVLLTVVPLW.

In terms of processing, processing of ComGE in competent cells requires ComC.

It is found in the cell membrane. The protein localises to the cell surface. Its function is as follows. Required for transformation and DNA binding. This is ComG operon protein 5 (comGE) from Bacillus subtilis (strain 168).